The sequence spans 364 residues: Peptide chain release factor 1 (364 aa).

N5-methylglutamine is present on Q237.

It belongs to the prokaryotic/mitochondrial release factor family. In terms of processing, methylated by PrmC. Methylation increases the termination efficiency of RF1.

The protein localises to the cytoplasm. Peptide chain release factor 1 directs the termination of translation in response to the peptide chain termination codons UAG and UAA. This chain is Peptide chain release factor 1, found in Rubrobacter xylanophilus (strain DSM 9941 / JCM 11954 / NBRC 16129 / PRD-1).